We begin with the raw amino-acid sequence, 113 residues long: Large ribosomal subunit protein uL22 (113 aa).

The protein belongs to the universal ribosomal protein uL22 family. As to quaternary structure, part of the 50S ribosomal subunit.

In terms of biological role, this protein binds specifically to 23S rRNA; its binding is stimulated by other ribosomal proteins, e.g. L4, L17, and L20. It is important during the early stages of 50S assembly. It makes multiple contacts with different domains of the 23S rRNA in the assembled 50S subunit and ribosome. Functionally, the globular domain of the protein is located near the polypeptide exit tunnel on the outside of the subunit, while an extended beta-hairpin is found that lines the wall of the exit tunnel in the center of the 70S ribosome. The protein is Large ribosomal subunit protein uL22 of Chloroflexus aggregans (strain MD-66 / DSM 9485).